The sequence spans 210 residues: Guanylate kinase (210 aa).

Positions 5-184 (GLLIVFSGPS…AAERVKHIIE (180 aa)) constitute a Guanylate kinase-like domain. Position 12-19 (12-19 (GPSGVGKG)) interacts with ATP.

The protein belongs to the guanylate kinase family.

It localises to the cytoplasm. It carries out the reaction GMP + ATP = GDP + ADP. In terms of biological role, essential for recycling GMP and indirectly, cGMP. This Streptococcus mutans serotype c (strain ATCC 700610 / UA159) protein is Guanylate kinase.